Here is a 208-residue protein sequence, read N- to C-terminus: Type 3 secretion system stator protein (208 aa).

This sequence belongs to the SctL stator family. The core secretion machinery of the T3SS is composed of approximately 20 different proteins, including cytoplasmic components, a base, an export apparatus and a needle. This subunit is part of the cytosolic complex.

It localises to the cytoplasm. In terms of biological role, component of the type III secretion system (T3SS), also called injectisome, which is used to inject bacterial effector proteins into eukaryotic host cells. Acts as a regulator of the HrcN/SctN ATPase activity. The protein is Type 3 secretion system stator protein of Sinorhizobium fredii (strain NBRC 101917 / NGR234).